A 119-amino-acid polypeptide reads, in one-letter code: Non-structural protein 3b (119 aa).

The region spanning 3–79 (YVSLLNQVWQ…AARKVCLRLQ (77 aa)) is the DRBM domain.

In terms of assembly, interacts with host RUNX1 isoform b.

It localises to the host nucleus. The protein localises to the host nucleolus. It is found in the host mitochondrion. Induces host cell G0/G1 arrest and apoptosis. This Pipistrellus abramus (Japanese pipistrelle) protein is Non-structural protein 3b.